Here is a 795-residue protein sequence, read N- to C-terminus: Phenylalanine--tRNA ligase beta subunit (795 aa).

Residues 39 to 148 (AGSFHGVVVG…ADAPIGTDIR (110 aa)) enclose the tRNA-binding domain. One can recognise a B5 domain in the interval 401–476 (PKRATITLRR…RVYGYNNIPD (76 aa)). Positions 454, 460, 463, and 464 each coordinate Mg(2+). The FDX-ACB domain maps to 701-794 (SRFPANRRDI…LKERFQASLR (94 aa)).

The protein belongs to the phenylalanyl-tRNA synthetase beta subunit family. Type 1 subfamily. As to quaternary structure, tetramer of two alpha and two beta subunits. It depends on Mg(2+) as a cofactor.

Its subcellular location is the cytoplasm. The enzyme catalyses tRNA(Phe) + L-phenylalanine + ATP = L-phenylalanyl-tRNA(Phe) + AMP + diphosphate + H(+). The sequence is that of Phenylalanine--tRNA ligase beta subunit from Shigella dysenteriae serotype 1 (strain Sd197).